Consider the following 660-residue polypeptide: Phosphatidylinositol-binding clathrin assembly protein (660 aa).

At Ser-2 the chain carries N-acetylserine. In terms of domain architecture, ENTH spans 14-145 (QHSVTGSAVS…VSYRQVAFDF (132 aa)). Residues Ser-16 and Ser-20 each carry the phosphoserine modification. Residues 221–294 (KYFDMKKNQC…LEGKKIKDST (74 aa)) are interaction with PIMREG. Lys-238 is covalently cross-linked (Glycyl lysine isopeptide (Lys-Gly) (interchain with G-Cter in SUMO2)). A phosphoserine mark is found at Ser-303 and Ser-315. The span at 556-566 (GTTKNDVSWSQ) shows a compositional bias: polar residues. The disordered stretch occupies residues 556-580 (GTTKNDVSWSQPGEKKLTGGSNWQP).

Belongs to the PICALM/SNAP91 family. Binds to clathrin; involves primarily the C-terminal sequences, but the full-length protein is required for full binding capacity. Binds phosphatidylinositol 4,5- bisphosphate. Interacts with PIMREG; this interaction may change the subcellular location into the nucleus. Interacts with AP2A1 (via its alpha-appendage domain). Interacts (via N-terminus) with VAMP2; VAMP3; VAMP7 and VAMP8 (Via N-terminus). Interacts with LC3/MAP1LC3A. In terms of tissue distribution, skins and livers of 1-week-old mice.

It is found in the cell membrane. Its subcellular location is the membrane. The protein resides in the clathrin-coated pit. The protein localises to the golgi apparatus. It localises to the cytoplasmic vesicle. It is found in the clathrin-coated vesicle. Its subcellular location is the nucleus. Functionally, cytoplasmic adapter protein that plays a critical role in clathrin-mediated endocytosis which is important in processes such as internalization of cell receptors, synaptic transmission or removal of apoptotic cells. Recruits AP-2 and attaches clathrin triskelions to the cytoplasmic side of plasma membrane leading to clathrin-coated vesicles (CCVs) assembly. Furthermore, regulates clathrin-coated vesicle size and maturation by directly sensing and driving membrane curvature. In addition to binding to clathrin, mediates the endocytosis of small R-SNARES (Soluble NSF Attachment Protein REceptors) between plasma membranes and endosomes including VAMP2, VAMP3, VAMP4, VAMP7 or VAMP8. In turn, PICALM-dependent SNARE endocytosis is required for the formation and maturation of autophagic precursors. Modulates thereby autophagy and the turnover of autophagy substrates such as MAPT/TAU or amyloid precursor protein cleaved C-terminal fragment (APP-CTF). This is Phosphatidylinositol-binding clathrin assembly protein (Picalm) from Mus musculus (Mouse).